The primary structure comprises 552 residues: Transcription factor kayak (552 aa).

2 disordered regions span residues 110 to 145 (LAQGSDSEDSNASYNDTQMNEEQDTTDTSSAHTDST) and 177 to 234 (GAAS…KRRV). Residues 111 to 127 (AQGSDSEDSNASYNDTQ) are compositionally biased toward polar residues. Positions 135–145 (TDTSSAHTDST) are enriched in low complexity. Residues 177–192 (GAASVGSSNANTSNTP) show a composition bias toward polar residues. The region spanning 212–275 (EQKRAVRRER…NQLEYCLAAH (64 aa)) is the bZIP domain. Residues 214–233 (KRAVRRERNKQAAARCRKRR) form a basic motif region. The tract at residues 240-247 (LTEEVEQL) is leucine-zipper. The segment covering 304 to 325 (AGSSGSGASSHHNHNSNDSSNG) has biased composition (low complexity). 3 disordered regions span residues 304–346 (AGSS…PLDL), 365–390 (LDGAIDSGSSLDQDGPPPSKRITLPP), and 514–552 (GGTGLTPVSGPLVPNSSSANKHPLELPTPTAEPSKLVSL). Over residues 333-343 (TLNSTGRSNSP) the composition is skewed to polar residues. S342 is modified (phosphoserine).

The protein belongs to the bZIP family. Fos subfamily. Homodimer. Heterodimer with Jra. The kay-Jra heterodimer binds more stably to the AP-1 site than either of the two proteins alone.

Its subcellular location is the nucleus. Developmentally regulated transcription factor AP-1 binds and recognizes the enhancer DNA sequence: 5'-TGA[CG]TCA-3'. May play a role in the function or determination of a particular subset of cells in the developing embryo. It is able to carry out its function either independently of or in conjunction with Jra. In Drosophila yakuba (Fruit fly), this protein is Transcription factor kayak.